Reading from the N-terminus, the 207-residue chain is NADH-quinone oxidoreductase subunit A (207 aa).

Helical transmembrane passes span 6 to 26 (WSAIAFILAAIALVVFMLVVP), 62 to 82 (LVAIFFVIFDLEALYLYAYAV), and 87 to 107 (AGWLGFAAAAIFITILIIGLV).

Belongs to the complex I subunit 3 family. As to quaternary structure, NDH-1 is composed of 14 different subunits. Subunits NuoA, H, J, K, L, M, N constitute the membrane sector of the complex.

The protein localises to the cell inner membrane. The enzyme catalyses a quinone + NADH + 5 H(+)(in) = a quinol + NAD(+) + 4 H(+)(out). NDH-1 shuttles electrons from NADH, via FMN and iron-sulfur (Fe-S) centers, to quinones in the respiratory chain. The immediate electron acceptor for the enzyme in this species is believed to be ubiquinone. Couples the redox reaction to proton translocation (for every two electrons transferred, four hydrogen ions are translocated across the cytoplasmic membrane), and thus conserves the redox energy in a proton gradient. The polypeptide is NADH-quinone oxidoreductase subunit A (Psychrobacter arcticus (strain DSM 17307 / VKM B-2377 / 273-4)).